A 546-amino-acid polypeptide reads, in one-letter code: Flavin-dependent oxygenase ucdF (546 aa).

Positions 81–263 (QGRIPYYAVM…VNTTIRTFPD (183 aa)) constitute an FAD-binding PCMH-type domain.

Belongs to the oxygen-dependent FAD-linked oxidoreductase family.

Functionally, nonribosomal peptide synthetase that mediates the biosynthesis of usterphenyllins and uscandidusins, p-terphenyl derivatives. The function of ucdF within the pathway still remains to be determined. UcdE further prenylates position C-14 of ring C of usterphenyllin B to form usterphenyllin A. The pathway begin with the biosynthesis of 4-hydroxyphenylpyruvate (HPPA) from L-tyrosine, possibly by the aminotransferase ucdG. The nonribosomal peptide synthetase ucdA then condenses two HPPA units to produce atromentin. The key step in this pathway is the reduction and dehydration of atromentin to form a terphenyl triol intermediate, performed by the NAD-dependent dehydrogenase ucdB. Further O-methylation by the methyltransferase ucdC forms terphenyllin carrying two methoxy moieties at C-9 and C-12, and subsequent dihydroxylation at C-3 of ring A and C-15 of ring C by the flavin-dependent oxygenase ucdD leads to 3,15-dihydroxyterphenyllin. Prenylation by ucdE at position C-5 of ring A forms usterphenyllin B, and is followed by a second prenylation at position C-14 of ring C to form usterphenyllin A. The following furan ring formation that leads to uscandidusins A and B was proven to be an unexpected spontaneous non-enzymatic reaction. The chain is Flavin-dependent oxygenase ucdF from Aspergillus ustus.